We begin with the raw amino-acid sequence, 77 residues long: Large ribosomal subunit protein bL28 (77 aa).

Belongs to the bacterial ribosomal protein bL28 family.

In Cupriavidus necator (strain ATCC 17699 / DSM 428 / KCTC 22496 / NCIMB 10442 / H16 / Stanier 337) (Ralstonia eutropha), this protein is Large ribosomal subunit protein bL28.